We begin with the raw amino-acid sequence, 697 residues long: Phenoloxidase 1 (697 aa).

A propeptide spans 1 to 101 (MSDMSGDVVE…PKHQEMATEV (101 aa)) (removed by PPAE1). Positions 217, 221, and 247 each coordinate Cu cation. N-linked (GlcNAc...) asparagine glycans are attached at residues asparagine 260 and asparagine 313. Glutamate 355 acts as the Proton acceptor in catalysis. Residues histidine 370, histidine 374, and histidine 410 each contribute to the Cu cation site. N-linked (GlcNAc...) asparagine glycans are attached at residues asparagine 498 and asparagine 552. 2 cysteine pairs are disulfide-bonded: cysteine 587–cysteine 631 and cysteine 589–cysteine 638.

Belongs to the tyrosinase family. As to quaternary structure, heterodimer. Cu(2+) is required as a cofactor. In terms of processing, activated by the cleavage of the N-terminal propeptide by PPAE1. Expressed in hemocytes.

The protein localises to the secreted. It catalyses the reaction L-tyrosine + O2 = L-dopaquinone + H2O. It carries out the reaction 2 L-dopa + O2 = 2 L-dopaquinone + 2 H2O. Activated by a cationic detergent cetyl pyridinium chloride (CPC). Inhibited by phenyl thio-urea (PTU). Its function is as follows. This is a copper-containing oxidase that functions in the formation of pigments such as melanins and other polyphenolic compounds. Catalyzes the rate-limiting conversions of tyrosine to DOPA, DOPA to DOPA-quinone and possibly 5,6 dihydroxyindole to indole-5'6 quinone. Catalyzes the oxidation of 4-methylcatechol. Binds to the surface of hemocytes and is involved in hemocyte melanization. The polypeptide is Phenoloxidase 1 (Spodoptera litura (Asian cotton leafworm)).